The following is a 143-amino-acid chain: SsrA-binding protein (143 aa).

It belongs to the SmpB family.

It localises to the cytoplasm. In terms of biological role, required for rescue of stalled ribosomes mediated by trans-translation. Binds to transfer-messenger RNA (tmRNA), required for stable association of tmRNA with ribosomes. tmRNA and SmpB together mimic tRNA shape, replacing the anticodon stem-loop with SmpB. tmRNA is encoded by the ssrA gene; the 2 termini fold to resemble tRNA(Ala) and it encodes a 'tag peptide', a short internal open reading frame. During trans-translation Ala-aminoacylated tmRNA acts like a tRNA, entering the A-site of stalled ribosomes, displacing the stalled mRNA. The ribosome then switches to translate the ORF on the tmRNA; the nascent peptide is terminated with the 'tag peptide' encoded by the tmRNA and targeted for degradation. The ribosome is freed to recommence translation, which seems to be the essential function of trans-translation. In Mycoplasmopsis synoviae (strain 53) (Mycoplasma synoviae), this protein is SsrA-binding protein.